A 111-amino-acid chain; its full sequence is uncharacterized protein (111 aa).

This is an uncharacterized protein from Paracoccus denitrificans.